Here is a 418-residue protein sequence, read N- to C-terminus: Voltage-gated ClC-type chloride channel ClcB (418 aa).

10 helical membrane passes run L5 to A25, L54 to F74, L146 to G166, L168 to I188, A222 to M242, W258 to W278, A291 to A311, G316 to Y336, L352 to M372, and M380 to I400.

Belongs to the chloride channel (TC 2.A.49) family. ClcB subfamily.

Its subcellular location is the cell inner membrane. Functionally, probably acts as an electrical shunt for an outwardly-directed proton pump that is linked to amino acid decarboxylation, as part of the extreme acid resistance (XAR) response. In Escherichia coli O127:H6 (strain E2348/69 / EPEC), this protein is Voltage-gated ClC-type chloride channel ClcB.